Consider the following 763-residue polypeptide: DNA polymerase 3 (763 aa).

This sequence belongs to the DNA polymerase type-B family.

It carries out the reaction DNA(n) + a 2'-deoxyribonucleoside 5'-triphosphate = DNA(n+1) + diphosphate. This Saccharolobus shibatae (strain ATCC 51178 / DSM 5389 / JCM 8931 / NBRC 15437 / B12) (Sulfolobus shibatae) protein is DNA polymerase 3 (dpo3).